Here is a 492-residue protein sequence, read N- to C-terminus: Replication factor C large subunit (492 aa).

Residue 46–53 (GPPGSGKT) participates in ATP binding. A disordered region spans residues 445–492 (VIPKRPKISDNQISEILTKDNNPKDDVKKASKKPESTSKKQATLDKFF). The segment covering 461–482 (LTKDNNPKDDVKKASKKPESTS) has biased composition (basic and acidic residues).

This sequence belongs to the activator 1 small subunits family. RfcL subfamily. In terms of assembly, heteromultimer composed of small subunits (RfcS) and large subunits (RfcL).

Part of the RFC clamp loader complex which loads the PCNA sliding clamp onto DNA. The sequence is that of Replication factor C large subunit from Methanococcus vannielii (strain ATCC 35089 / DSM 1224 / JCM 13029 / OCM 148 / SB).